Consider the following 552-residue polypeptide: Lon protease 2 (552 aa).

ATP is bound at residue 97–104; it reads GPPGVGKT. Residues 349-535 enclose the Lon proteolytic domain; that stretch reads EPQVGIVNGL…QEVLDEILVN (187 aa). Catalysis depends on residues Ser-445 and Lys-488.

The protein belongs to the peptidase S16 family. In terms of assembly, homohexamer. Organized in a ring with a central cavity.

Its subcellular location is the cytoplasm. It catalyses the reaction Hydrolysis of proteins in presence of ATP.. Its function is as follows. ATP-dependent serine protease that mediates the selective degradation of mutant and abnormal proteins as well as certain short-lived regulatory proteins. Required for cellular homeostasis and for survival from DNA damage and developmental changes induced by stress. Degrades polypeptides processively to yield small peptide fragments that are 5 to 10 amino acids long. Binds to DNA in a double-stranded, site-specific manner. In Bacillus subtilis (strain 168), this protein is Lon protease 2 (lon2).